We begin with the raw amino-acid sequence, 180 residues long: NADH-quinone oxidoreductase subunit I 1 (180 aa).

2 4Fe-4S ferredoxin-type domains span residues 50–80 (LSRDPDGEERCVACNLCAVACPVDCIALQKT) and 90–119 (EFFRINFSRCIFCGFCEEACPTYAIQLTPD). [4Fe-4S] cluster-binding residues include cysteine 60, cysteine 63, cysteine 66, cysteine 70, cysteine 99, cysteine 102, cysteine 105, and cysteine 109.

Belongs to the complex I 23 kDa subunit family. In terms of assembly, NDH-1 is composed of 14 different subunits. Subunits NuoA, H, J, K, L, M, N constitute the membrane sector of the complex. Requires [4Fe-4S] cluster as cofactor.

It localises to the cell inner membrane. It carries out the reaction a quinone + NADH + 5 H(+)(in) = a quinol + NAD(+) + 4 H(+)(out). Its function is as follows. NDH-1 shuttles electrons from NADH, via FMN and iron-sulfur (Fe-S) centers, to quinones in the respiratory chain. The immediate electron acceptor for the enzyme in this species is believed to be ubiquinone. Couples the redox reaction to proton translocation (for every two electrons transferred, four hydrogen ions are translocated across the cytoplasmic membrane), and thus conserves the redox energy in a proton gradient. This Nitrosococcus oceani (strain ATCC 19707 / BCRC 17464 / JCM 30415 / NCIMB 11848 / C-107) protein is NADH-quinone oxidoreductase subunit I 1.